Consider the following 316-residue polypeptide: tRNA dimethylallyltransferase (316 aa).

17–24 serves as a coordination point for ATP; that stretch reads GPTASGKT. Residue 19-24 coordinates substrate; sequence TASGKT. Interaction with substrate tRNA regions lie at residues 42-45, 166-170, and 247-252; these read DSAL, QRLSR, and RCVGYR.

Belongs to the IPP transferase family. As to quaternary structure, monomer. Mg(2+) serves as cofactor.

The catalysed reaction is adenosine(37) in tRNA + dimethylallyl diphosphate = N(6)-dimethylallyladenosine(37) in tRNA + diphosphate. In terms of biological role, catalyzes the transfer of a dimethylallyl group onto the adenine at position 37 in tRNAs that read codons beginning with uridine, leading to the formation of N6-(dimethylallyl)adenosine (i(6)A). The chain is tRNA dimethylallyltransferase from Salmonella newport (strain SL254).